Consider the following 692-residue polypeptide: Proprotein convertase subtilisin/kexin type 9 (692 aa).

An N-terminal signal peptide occupies residues 1–30 (MGTVSSRRSWWPLPLPLLLLLLLGLAGARA). A propeptide spanning residues 31-152 (QEDEDGDYEE…IEEDSSVFAQ (122 aa)) is cleaved from the precursor. At Y38 the chain carries Sulfotyrosine. S47 carries the phosphoserine modification. The 73-residue stretch at 77–149 (TYVVVLKEET…VDYIEEDSSV (73 aa)) folds into the Inhibitor I9 domain. Positions 155 to 444 (PWNLERITPA…VLTPNLVAAL (290 aa)) constitute a Peptidase S8 domain. Active-site charge relay system residues include D186 and H226. 2 disulfide bridges follow: C223–C255 and C323–C358. The active-site Charge relay system is the S386. The C-terminal domain stretch occupies residues 450–692 (RAGWQLFCRT…HLVQASQELQ (243 aa)). Disulfide bonds link C457/C527, C477/C526, and C486/C509. N533 carries an N-linked (GlcNAc...) asparagine glycan. Intrachain disulfides connect C534/C601, C552/C600, C562/C588, C608/C679, C626/C678, and C635/C654. S688 bears the Phosphoserine mark.

This sequence belongs to the peptidase S8 family. Monomer. Can self-associate to form dimers and higher multimers which may have increased LDLR degrading activity. The precursor protein but not the mature protein may form multimers. Interacts with APOB, VLDLR, LRP8/APOER2 and BACE1. The full-length immature form (pro-PCSK9) interacts with SCNN1A, SCNN1B and SCNN1G. The pro-PCSK9 form (via C-terminal domain) interacts with LDLR. Interacts (via the C-terminal domain) with ANXA2 (via repeat Annexin 1); the interaction inhibits the degradation of LDLR. The cofactor is Ca(2+). Cleavage by furin and PCSK5 generates a truncated inactive protein that is unable to induce LDLR degradation. Post-translationally, undergoes autocatalytic cleavage in the endoplasmic reticulum to release the propeptide from the N-terminus and the cleavage of the propeptide is strictly required for its maturation and activation. The cleaved propeptide however remains associated with the catalytic domain through non-covalent interactions, preventing potential substrates from accessing its active site. As a result, it is secreted from cells as a propeptide-containing, enzymatically inactive protein. In terms of processing, phosphorylation protects the propeptide against proteolysis.

The protein resides in the cytoplasm. The protein localises to the secreted. Its subcellular location is the endosome. It is found in the lysosome. It localises to the cell surface. The protein resides in the endoplasmic reticulum. The protein localises to the golgi apparatus. Its proteolytic activity is autoinhibited by the non-covalent binding of the propeptide to the catalytic domain. Inhibited by EGTA. Crucial player in the regulation of plasma cholesterol homeostasis. Binds to low-density lipid receptor family members: low density lipoprotein receptor (LDLR), very low density lipoprotein receptor (VLDLR), apolipoprotein E receptor (LRP1/APOER) and apolipoprotein receptor 2 (LRP8/APOER2), and promotes their degradation in intracellular acidic compartments. Acts via a non-proteolytic mechanism to enhance the degradation of the hepatic LDLR through a clathrin LDLRAP1/ARH-mediated pathway. May prevent the recycling of LDLR from endosomes to the cell surface or direct it to lysosomes for degradation. Can induce ubiquitination of LDLR leading to its subsequent degradation. Inhibits intracellular degradation of APOB via the autophagosome/lysosome pathway in a LDLR-independent manner. Involved in the disposal of non-acetylated intermediates of BACE1 in the early secretory pathway. Inhibits epithelial Na(+) channel (ENaC)-mediated Na(+) absorption by reducing ENaC surface expression primarily by increasing its proteasomal degradation. Regulates neuronal apoptosis via modulation of LRP8/APOER2 levels and related anti-apoptotic signaling pathways. In Colobus guereza (Mantled guereza), this protein is Proprotein convertase subtilisin/kexin type 9 (PCSK9).